Consider the following 357-residue polypeptide: Non-structural protein NS2 (357 aa).

2 disordered regions span residues 163–199 (NERESAPRLQVQSVAPREESRWMDDDEAKVDEEAREM) and 228–267 (LDEKDEEDGDEREDEERVKTLSDDDEQGEDASDDEHPKTH). 2 stretches are compositionally biased toward acidic residues: residues 230–241 (EKDEEDGDERED) and 250–260 (DDDEQGEDASD).

This sequence belongs to the orbivirus non-structural protein NS2 family.

Its function is as follows. Single-stranded RNA-binding protein. This Antilocapra americana (Pronghorn) protein is Non-structural protein NS2 (Segment-8).